The chain runs to 192 residues: dTTP/UTP pyrophosphatase (192 aa).

Asp-70 functions as the Proton acceptor in the catalytic mechanism.

This sequence belongs to the Maf family. YhdE subfamily. The cofactor is a divalent metal cation.

It is found in the cytoplasm. It catalyses the reaction dTTP + H2O = dTMP + diphosphate + H(+). It carries out the reaction UTP + H2O = UMP + diphosphate + H(+). Its function is as follows. Nucleoside triphosphate pyrophosphatase that hydrolyzes dTTP and UTP. May have a dual role in cell division arrest and in preventing the incorporation of modified nucleotides into cellular nucleic acids. The sequence is that of dTTP/UTP pyrophosphatase from Alkaliphilus oremlandii (strain OhILAs) (Clostridium oremlandii (strain OhILAs)).